Here is a 629-residue protein sequence, read N- to C-terminus: Solute carrier family 22 member 14 (629 aa).

Residues 1 to 21 (MKEDQNYKTAFGSQNSRDTHR) form a disordered region. Residues 1 to 67 (MKEDQNYKTA…IGEFGTFQWR (67 aa)) are Cytoplasmic-facing. Residues 7 to 16 (YKTAFGSQNS) are compositionally biased toward polar residues. A helical transmembrane segment spans residues 68 to 88 (LVVLTFIPSILSTFFIFSHHF). Over 89–183 (LLTAQRPYCN…LVCGNEPNKE (95 aa)) the chain is Extracellular. Residues Asn98, Asn116, Asn124, and Asn149 are each glycosylated (N-linked (GlcNAc...) asparagine). The chain crosses the membrane as a helical span at residues 184–204 (NGLTVFLSGVLTGSLLFGFLS). Topologically, residues 205–209 (DKLGR) are cytoplasmic. A helical transmembrane segment spans residues 210 to 230 (YPIILLSLLGFLIFGFGTAFV). Over 231–240 (SSFYQYLFFR) the chain is Extracellular. The chain crosses the membrane as a helical span at residues 241 to 261 (FFVAQASVGYAICSVSLVMEW). The Cytoplasmic segment spans residues 262–269 (LVGEHRAQ). The helical transmembrane segment at 270 to 290 (AVILQHSFLTIGVILLTGLAY) threads the bilayer. Residues 291 to 295 (KVVHW) lie on the Extracellular side of the membrane. A helical transmembrane segment spans residues 296 to 316 (RLLCLLGGMPMFPLICNIWVL). The Cytoplasmic segment spans residues 317–378 (RESPRWLMVR…DFCTNQHLFK (62 aa)). Residues 379–399 (VVLAIGCVWFTVSYISFTLNL) form a helical membrane-spanning segment. At 400-409 (KMNDFGLDVY) the chain is on the extracellular side. Residues 410–430 (FVQMVRSIVAVPARLCCIILL) traverse the membrane as a helical segment. At 431–436 (EYFGRK) the chain is on the cytoplasmic side. Residues 437-457 (WALNLTLFLVTSMCLFLLFLP) form a helical membrane-spanning segment. Residues 458–463 (QEPKST) are Extracellular-facing. A helical membrane pass occupies residues 464 to 484 (IILTLMLAEFSMAGTLSIFFI). Residues 485–496 (YTAELLPTVLRS) lie on the Cytoplasmic side of the membrane. Residues 497-517 (TGLGMVSLAWVAGAISSVAIF) traverse the membrane as a helical segment. At 518-523 (KQTKTQ) the chain is on the extracellular side. The helical transmembrane segment at 524–544 (LPIFFCCLCCVLALCFSSLVP) threads the bilayer. Residues 545–629 (ETGSQSLRDS…PVQSLKAQPP (85 aa)) lie on the Cytoplasmic side of the membrane.

Belongs to the major facilitator (TC 2.A.1) superfamily. Organic cation transporter (TC 2.A.1.19) family. In terms of tissue distribution, testis-specific (at protein level). Specifically expressed in male germ cells (at protein level).

It is found in the mitochondrion inner membrane. The protein localises to the cell projection. The protein resides in the cilium. It localises to the flagellum membrane. It catalyses the reaction riboflavin(in) = riboflavin(out). Functionally, riboflavin transporter localized at the inner mitochondrial membrane of the spermatozoa midpiece, which is required for male fertility. SLC22A14-mediated riboflavin transport is essential for spermatozoa energy generation and motility: riboflavin is the precursor of FMN and FAD, which are coenzymes of many enzymes in the TCA cycle (the citric acid cycle) in mitochondria. Required for sperm motility and normal sperm flagellar structure. This Mus musculus (Mouse) protein is Solute carrier family 22 member 14.